Here is a 141-residue protein sequence, read N- to C-terminus: Large ribosomal subunit protein uL11 (141 aa).

Residues 1 to 23 (MAKQVTGQAKFQVPGGQATPAPP) form a disordered region.

The protein belongs to the universal ribosomal protein uL11 family. As to quaternary structure, part of the ribosomal stalk of the 50S ribosomal subunit. Interacts with L10 and the large rRNA to form the base of the stalk. L10 forms an elongated spine to which L12 dimers bind in a sequential fashion forming a multimeric L10(L12)X complex. In terms of processing, one or more lysine residues are methylated.

In terms of biological role, forms part of the ribosomal stalk which helps the ribosome interact with GTP-bound translation factors. In Rhodopirellula baltica (strain DSM 10527 / NCIMB 13988 / SH1), this protein is Large ribosomal subunit protein uL11.